A 51-amino-acid chain; its full sequence is MPSHKSFRTKQKLAKAARQNRPIPQWIRLRTGNTVHYNMKRRHWRRTKLNI.

Positions 1–15 (MPSHKSFRTKQKLAK) are enriched in basic residues. The disordered stretch occupies residues 1–21 (MPSHKSFRTKQKLAKAARQNR).

This sequence belongs to the eukaryotic ribosomal protein eL39 family. In terms of assembly, component of the large ribosomal subunit (LSU). Mature yeast ribosomes consist of a small (40S) and a large (60S) subunit. The 40S small subunit contains 1 molecule of ribosomal RNA (18S rRNA) and at least 33 different proteins. The large 60S subunit contains 3 rRNA molecules (25S, 5.8S and 5S rRNA) and at least 46 different proteins. eL39 interacts with yih1.

The protein resides in the cytoplasm. Functionally, component of the ribosome, a large ribonucleoprotein complex responsible for the synthesis of proteins in the cell. The small ribosomal subunit (SSU) binds messenger RNAs (mRNAs) and translates the encoded message by selecting cognate aminoacyl-transfer RNA (tRNA) molecules. The large subunit (LSU) contains the ribosomal catalytic site termed the peptidyl transferase center (PTC), which catalyzes the formation of peptide bonds, thereby polymerizing the amino acids delivered by tRNAs into a polypeptide chain. The nascent polypeptides leave the ribosome through a tunnel in the LSU and interact with protein factors that function in enzymatic processing, targeting, and the membrane insertion of nascent chains at the exit of the ribosomal tunnel. This Schizosaccharomyces pombe (strain 972 / ATCC 24843) (Fission yeast) protein is Large ribosomal subunit protein eL39 (rpl39).